Consider the following 562-residue polypeptide: DNA ligase (562 aa).

Residue E250 coordinates ATP. K252 (N6-AMP-lysine intermediate) is an active-site residue. R257, R272, E302, F342, R417, and K423 together coordinate ATP.

This sequence belongs to the ATP-dependent DNA ligase family. The cofactor is Mg(2+). It depends on Zn(2+) as a cofactor.

The enzyme catalyses ATP + (deoxyribonucleotide)n-3'-hydroxyl + 5'-phospho-(deoxyribonucleotide)m = (deoxyribonucleotide)n+m + AMP + diphosphate.. It carries out the reaction NAD(+) + (deoxyribonucleotide)n-3'-hydroxyl + 5'-phospho-(deoxyribonucleotide)m = (deoxyribonucleotide)n+m + AMP + beta-nicotinamide D-nucleotide.. Functionally, DNA ligase that seals nicks in double-stranded DNA during DNA replication, DNA recombination and DNA repair. Can use both ATP and NAD(+), but NAD(+) may be a preferred nucleotide cofactor. The chain is DNA ligase from Thermococcus onnurineus (strain NA1).